A 120-amino-acid polypeptide reads, in one-letter code: Ribosome-binding factor A (120 aa).

Belongs to the RbfA family. As to quaternary structure, monomer. Binds 30S ribosomal subunits, but not 50S ribosomal subunits or 70S ribosomes.

The protein resides in the cytoplasm. One of several proteins that assist in the late maturation steps of the functional core of the 30S ribosomal subunit. Associates with free 30S ribosomal subunits (but not with 30S subunits that are part of 70S ribosomes or polysomes). Required for efficient processing of 16S rRNA. May interact with the 5'-terminal helix region of 16S rRNA. In Rickettsia peacockii (strain Rustic), this protein is Ribosome-binding factor A.